Reading from the N-terminus, the 530-residue chain is Anthranilate synthase component 1, pyocyanine specific (530 aa).

Substrate is bound at residue 331 to 332 (GT). E364 lines the Mg(2+) pocket. Substrate contacts are provided by residues Y452, R472, 486-488 (GAG), and G488. E501 contributes to the Mg(2+) binding site.

Belongs to the anthranilate synthase component I family. In terms of assembly, heterotetramer consisting of two non-identical subunits: a beta subunit (PhnB) and a large alpha subunit (PhnA). Mg(2+) is required as a cofactor.

It catalyses the reaction chorismate + L-glutamine = anthranilate + pyruvate + L-glutamate + H(+). It participates in secondary metabolite biosynthesis; pyocyanine biosynthesis. Its function is as follows. Part of a heterotetrameric complex that catalyzes the two-step biosynthesis of anthranilate, a precursor for Pseudomonas quinolone signal (2-heptyl-3-hydroxy-4-quinolone; PQS) production which is required to induce the genes for the biosynthesis of the virulence factor pyocyanine (PCN), a characteristic blue-green phenazine pigment produced by P.aeruginosa. In the first step, the glutamine-binding beta subunit (PhnB) of anthranilate synthase (AS) provides the glutamine amidotransferase activity which generates ammonia as a substrate that, along with chorismate, is used in the second step, catalyzed by the large alpha subunit of AS (PhnA) to produce anthranilate. This chain is Anthranilate synthase component 1, pyocyanine specific, found in Pseudomonas aeruginosa (strain ATCC 15692 / DSM 22644 / CIP 104116 / JCM 14847 / LMG 12228 / 1C / PRS 101 / PAO1).